The sequence spans 224 residues: MAAAVPQRAWTVEQLRSEQLPKKDIIKFLQDHGSDSFLAEHKLLGNIKNVAKTANKDHLVNAYNHLFESKRFKGTETISKVSEQVKNVKLSDDKPKDSKSEETLDEGPPKYTKSILKKGDKTNFPKKGDVVHCWYTGTLPDGTVFDTNIQTSSKKKKNAKPLSFKVGVGKVIRGWDEALLTMSKGEKARLEIEPEWAYGKKGQPDAKIPPNTKLIFEVELVDID.

Ala-2 is subject to N-acetylalanine. Ser-36 carries the post-translational modification Phosphoserine. The tract at residues 88-118 is disordered; the sequence is VKLSDDKPKDSKSEETLDEGPPKYTKSILKK. The span at 89–102 shows a compositional bias: basic and acidic residues; sequence KLSDDKPKDSKSEE. At Lys-99 the chain carries N6-acetyllysine. In terms of domain architecture, PPIase FKBP-type spans 128–224; the sequence is GDVVHCWYTG…IFEVELVDID (97 aa). Position 152 is a phosphoserine (Ser-152). At Lys-170 the chain carries N6-acetyllysine.

Belongs to the FKBP-type PPIase family.

It is found in the nucleus. The catalysed reaction is [protein]-peptidylproline (omega=180) = [protein]-peptidylproline (omega=0). With respect to regulation, inhibited preferentially by rapamycin over FK506. Functionally, FK506- and rapamycin-binding proteins (FKBPs) constitute a family of receptors for the two immunosuppressants which inhibit T-cell proliferation by arresting two distinct cytoplasmic signal transmission pathways. PPIases accelerate the folding of proteins. The polypeptide is Peptidyl-prolyl cis-trans isomerase FKBP3 (Fkbp3) (Mus musculus (Mouse)).